The sequence spans 170 residues: Peptide deformylase (170 aa).

The Fe cation site is built by Cys-94 and His-136. Glu-137 is an active-site residue. A Fe cation-binding site is contributed by His-140.

Belongs to the polypeptide deformylase family. Fe(2+) is required as a cofactor.

It carries out the reaction N-terminal N-formyl-L-methionyl-[peptide] + H2O = N-terminal L-methionyl-[peptide] + formate. Its function is as follows. Removes the formyl group from the N-terminal Met of newly synthesized proteins. Requires at least a dipeptide for an efficient rate of reaction. N-terminal L-methionine is a prerequisite for activity but the enzyme has broad specificity at other positions. The polypeptide is Peptide deformylase (Stenotrophomonas maltophilia (strain K279a)).